The sequence spans 786 residues: Rho GTPase-activating protein 10 (786 aa).

The BAR domain maps to 7-262; it reads EFSDCYLDSP…IRQNPKDQKR (256 aa). Residues 265–372 enclose the PH domain; sequence QFTAEGYLYV…WLEALGGKEA (108 aa). A Rho-GAP domain is found at 389-574; it reads AQLDKMGFTI…ILIENHEKIF (186 aa). Disordered regions lie at residues 584–609 and 622–714; these read EPTCLSASPPNAPPRQSKRQGQRTKR and EGDS…PFPL. Positions 599–609 are enriched in basic residues; the sequence is QSKRQGQRTKR. Low complexity predominate over residues 634 to 649; sequence PSSSQDSLSTPSPTTS. Over residues 673–701 the composition is skewed to polar residues; the sequence is TATTPSQTRPSMVQWLNMQSPTTPSSNPA. Residues 702–714 show a composition bias toward pro residues; the sequence is GTPPSPRMSPFPL. Residues 728–786 form the SH3 domain; that stretch reads VINRKARAVYPCEAEHSSELSFEIGAIFEDVQTSREPGWLEGTLNGKRGLIPQNYVKLL.

As to quaternary structure, interacts with PKN3. Interacts with caspase-activated PAK2 proteolytic fragment PAK-2p34; the interaction does not affect ARHGAP10 GTPase activation activity towards RHOA and CDC42. Interacts via its SH3 domain with PTK2/FAK1. Interacts with PTK2B/PYK2; the interaction negatively regulates ARHGAP10 GTPase-activating activity. Interacts with MICAL1 and WDR44; complex formation might transit from GRAF2/ARHGAP10-MICAL1 to GRAF2/ARHGAP10-WDR44 complexes. Post-translationally, phosphorylated on tyrosine residues, probably involving PTK2B/PYK2. In terms of tissue distribution, high levels of expression in brain, testes, liver, heart and kidney.

It is found in the cytoplasm. The protein resides in the perinuclear region. The protein localises to the cell membrane. It localises to the endosome membrane. Its function is as follows. GTPase-activating protein that catalyzes the conversion of active GTP-bound Rho GTPases to their inactive GDP-bound form, thus suppressing various Rho GTPase-mediated cellular processes. Also converts Cdc42 to an inactive GDP-bound state. Essential for PTKB2 regulation of cytoskeletal organization via Rho family GTPases. Inhibits PAK2 proteolytic fragment PAK-2p34 kinase activity and changes its localization from the nucleus to the perinuclear region. Stabilizes PAK-2p34 thereby increasing stimulation of cell death. Associates with MICAL1 on the endosomal membrane to promote Rab8-Rab10-dependent tubule extension. After dissociation with MICAL1, recruits WDR44 which connects the endoplasmic reticulum (ER) with the endosomal tubule, thereby participating in the export of a subset of neosynthesized proteins. The protein is Rho GTPase-activating protein 10 (Arhgap10) of Mus musculus (Mouse).